A 363-amino-acid polypeptide reads, in one-letter code: Chorismate synthase (363 aa).

Residues Arg-48 and Arg-54 each coordinate NADP(+). Residues 125–127, 237–238, Gly-277, 292–296, and Arg-318 each bind FMN; these read RSS, NA, and KPTSS.

The protein belongs to the chorismate synthase family. Homotetramer. Requires FMNH2 as cofactor.

The catalysed reaction is 5-O-(1-carboxyvinyl)-3-phosphoshikimate = chorismate + phosphate. It functions in the pathway metabolic intermediate biosynthesis; chorismate biosynthesis; chorismate from D-erythrose 4-phosphate and phosphoenolpyruvate: step 7/7. Its function is as follows. Catalyzes the anti-1,4-elimination of the C-3 phosphate and the C-6 proR hydrogen from 5-enolpyruvylshikimate-3-phosphate (EPSP) to yield chorismate, which is the branch point compound that serves as the starting substrate for the three terminal pathways of aromatic amino acid biosynthesis. This reaction introduces a second double bond into the aromatic ring system. This Pseudomonas fluorescens (strain Pf0-1) protein is Chorismate synthase.